Reading from the N-terminus, the 130-residue chain is Small ribosomal subunit protein uS9 (130 aa).

Residues 109–130 form a disordered region; the sequence is RMKERRKYGLKKARKAPQFSKR. Basic residues predominate over residues 111–130; the sequence is KERRKYGLKKARKAPQFSKR.

Belongs to the universal ribosomal protein uS9 family.

In Caldanaerobacter subterraneus subsp. tengcongensis (strain DSM 15242 / JCM 11007 / NBRC 100824 / MB4) (Thermoanaerobacter tengcongensis), this protein is Small ribosomal subunit protein uS9.